The chain runs to 100 residues: Urease subunit gamma (100 aa).

The protein belongs to the urease gamma subunit family. Heterotrimer of UreA (gamma), UreB (beta) and UreC (alpha) subunits. Three heterotrimers associate to form the active enzyme.

The protein localises to the cytoplasm. It catalyses the reaction urea + 2 H2O + H(+) = hydrogencarbonate + 2 NH4(+). The protein operates within nitrogen metabolism; urea degradation; CO(2) and NH(3) from urea (urease route): step 1/1. This chain is Urease subunit gamma, found in Actinobacillus pleuropneumoniae serotype 5b (strain L20).